The chain runs to 181 residues: Cytochrome b6-f complex iron-sulfur subunit (181 aa).

A disordered region spans residues M1–E35. Helical transmembrane passes span V53–I73 and G114–V134. A Rieske domain is found at L85 to I178. Positions 124, 126, 142, and 145 each coordinate [2Fe-2S] cluster. The cysteines at positions 129 and 144 are disulfide-linked.

Belongs to the Rieske iron-sulfur protein family. [2Fe-2S] cluster serves as cofactor.

It localises to the cell inner membrane. It carries out the reaction 2 oxidized [plastocyanin] + a plastoquinol + 2 H(+)(in) = 2 reduced [plastocyanin] + a plastoquinone + 4 H(+)(out). Its function is as follows. Component of the green S-bacteria bc-complex which consists of the Rieske protein and cytochrome b subunit and which appears to lack a cytochrome c1-equivalent. This complex has a comparatively low redox potential. The sequence is that of Cytochrome b6-f complex iron-sulfur subunit (petC) from Chlorobaculum thiosulfatiphilum (Chlorobium limicola f.sp. thiosulfatophilum).